Consider the following 313-residue polypeptide: Proline iminopeptidase (313 aa).

The AB hydrolase-1 domain occupies K35–E298. S110 (nucleophile) is an active-site residue. The active site involves D266. H294 functions as the Proton donor in the catalytic mechanism.

Belongs to the peptidase S33 family. As to quaternary structure, homooligomer.

The protein localises to the cytoplasm. The enzyme catalyses Release of N-terminal proline from a peptide.. In terms of biological role, may be involved in proline metabolism and sensitivity to ascamycin. Has ascamycin dealanylating activity. The chain is Proline iminopeptidase (pip) from Xanthomonas citri (Xanthomonas campestris pv. citri).